A 117-amino-acid chain; its full sequence is Iron-sulfur cluster insertion protein ErpA (117 aa).

Positions 45, 109, and 111 each coordinate iron-sulfur cluster.

It belongs to the HesB/IscA family. As to quaternary structure, homodimer. Iron-sulfur cluster is required as a cofactor.

Required for insertion of 4Fe-4S clusters for at least IspG. This Ruthia magnifica subsp. Calyptogena magnifica protein is Iron-sulfur cluster insertion protein ErpA.